The primary structure comprises 70 residues: Large ribosomal subunit protein bL31 (70 aa).

Cysteine 16, cysteine 18, cysteine 37, and cysteine 40 together coordinate Zn(2+).

Belongs to the bacterial ribosomal protein bL31 family. Type A subfamily. As to quaternary structure, part of the 50S ribosomal subunit. Requires Zn(2+) as cofactor.

Binds the 23S rRNA. This Shewanella denitrificans (strain OS217 / ATCC BAA-1090 / DSM 15013) protein is Large ribosomal subunit protein bL31.